Here is a 169-residue protein sequence, read N- to C-terminus: MYFSTQIVNNKEKIMDTIFCNKGCCSLQTIKKKKPKVCDPNERYPFEKRKAGVFVECGSKFLLVQSYNDCWGIPKGHMEAYDHSPKTCAERELKEETGLEVKLTDAHLFRILLDNYYIYKISIPSVDQVDLSALPQLDSTGIGWVDMECAFDLNLTVLTQKILMALSCN.

A Nudix hydrolase domain is found at 46-169 (FEKRKAGVFV…QKILMALSCN (124 aa)). The Nudix box motif lies at 76-98 (GHMEAYDHSPKTCAERELKEETG). Mg(2+) is bound by residues E92, E96, and D138.

It belongs to the Nudix hydrolase family. The cofactor is Mg(2+). Mn(2+) is required as a cofactor.

This is Putative hydrolase 111R from Aedes vexans (Inland floodwater mosquito).